The following is a 245-amino-acid chain: Ribonuclease 3 (245 aa).

Positions 24–146 (YTVFSQKLGY…IIGAIYLESG (123 aa)) constitute an RNase III domain. E59 serves as a coordination point for Mg(2+). The active site involves D63. Residues N132 and E135 each contribute to the Mg(2+) site. E135 is a catalytic residue. The DRBM domain maps to 173–243 (DPKTLLQEYL…ARRAYKLAVV (71 aa)).

This sequence belongs to the ribonuclease III family. Homodimer. Mg(2+) is required as a cofactor.

It localises to the cytoplasm. It catalyses the reaction Endonucleolytic cleavage to 5'-phosphomonoester.. Its function is as follows. Digests double-stranded RNA. Involved in the processing of primary rRNA transcript to yield the immediate precursors to the large and small rRNAs (23S and 16S). Processes some mRNAs, and tRNAs when they are encoded in the rRNA operon. Processes pre-crRNA and tracrRNA of type II CRISPR loci if present in the organism. The sequence is that of Ribonuclease 3 from Nitrosomonas eutropha (strain DSM 101675 / C91 / Nm57).